An 86-amino-acid chain; its full sequence is Large ribosomal subunit protein bL31B (86 aa).

This sequence belongs to the bacterial ribosomal protein bL31 family. Type B subfamily. As to quaternary structure, part of the 50S ribosomal subunit.

The sequence is that of Large ribosomal subunit protein bL31B from Streptococcus agalactiae serotype III (strain NEM316).